The chain runs to 207 residues: Vexin (207 aa).

Residues R65–S104 form a disordered region.

This sequence belongs to the vexin family.

The protein localises to the cell membrane. The protein resides in the nucleus. Functionally, required for neurogenesis in the neural plate and retina. Strongly cooperates with neural bHLH factors to promote neurogenesis. The polypeptide is Vexin (Mus musculus (Mouse)).